A 447-amino-acid polypeptide reads, in one-letter code: Exodeoxyribonuclease 7 large subunit (447 aa).

This sequence belongs to the XseA family. Heterooligomer composed of large and small subunits.

It is found in the cytoplasm. The catalysed reaction is Exonucleolytic cleavage in either 5'- to 3'- or 3'- to 5'-direction to yield nucleoside 5'-phosphates.. Bidirectionally degrades single-stranded DNA into large acid-insoluble oligonucleotides, which are then degraded further into small acid-soluble oligonucleotides. The chain is Exodeoxyribonuclease 7 large subunit from Thioalkalivibrio sulfidiphilus (strain HL-EbGR7).